A 462-amino-acid polypeptide reads, in one-letter code: ATP synthase subunit beta (462 aa).

152–159 (GGAGVGKT) serves as a coordination point for ATP.

It belongs to the ATPase alpha/beta chains family. As to quaternary structure, F-type ATPases have 2 components, CF(1) - the catalytic core - and CF(0) - the membrane proton channel. CF(1) has five subunits: alpha(3), beta(3), gamma(1), delta(1), epsilon(1). CF(0) has three main subunits: a(1), b(2) and c(9-12). The alpha and beta chains form an alternating ring which encloses part of the gamma chain. CF(1) is attached to CF(0) by a central stalk formed by the gamma and epsilon chains, while a peripheral stalk is formed by the delta and b chains.

It is found in the cell inner membrane. The catalysed reaction is ATP + H2O + 4 H(+)(in) = ADP + phosphate + 5 H(+)(out). Produces ATP from ADP in the presence of a proton gradient across the membrane. The catalytic sites are hosted primarily by the beta subunits. The protein is ATP synthase subunit beta of Blochmanniella pennsylvanica (strain BPEN).